A 552-amino-acid chain; its full sequence is uncharacterized protein (552 aa).

The DhaL domain maps to 8–200; the sequence is KLFADMIIQG…LLCVYEGFLK (193 aa).

This is an uncharacterized protein from Staphylococcus haemolyticus (strain JCSC1435).